The following is a 481-amino-acid chain: Argininosuccinate lyase (481 aa).

Residues 1 to 17 (MKNAPVDTQSDAATSFE) show a composition bias toward polar residues. Positions 1–25 (MKNAPVDTQSDAATSFEGTAANPQW) are disordered.

This sequence belongs to the lyase 1 family. Argininosuccinate lyase subfamily.

It localises to the cytoplasm. The enzyme catalyses 2-(N(omega)-L-arginino)succinate = fumarate + L-arginine. The protein operates within amino-acid biosynthesis; L-arginine biosynthesis; L-arginine from L-ornithine and carbamoyl phosphate: step 3/3. The protein is Argininosuccinate lyase of Gluconobacter oxydans (strain 621H) (Gluconobacter suboxydans).